Reading from the N-terminus, the 205-residue chain is Small ribosomal subunit protein uS4 (205 aa).

Positions 94–157 (SRLDTVVYRM…KQIALIQESI (64 aa)) constitute an S4 RNA-binding domain.

Belongs to the universal ribosomal protein uS4 family. As to quaternary structure, part of the 30S ribosomal subunit. Contacts protein S5. The interaction surface between S4 and S5 is involved in control of translational fidelity.

Its function is as follows. One of the primary rRNA binding proteins, it binds directly to 16S rRNA where it nucleates assembly of the body of the 30S subunit. In terms of biological role, with S5 and S12 plays an important role in translational accuracy. This is Small ribosomal subunit protein uS4 from Rickettsia canadensis (strain McKiel).